The primary structure comprises 143 residues: Large ribosomal subunit protein uL16 (143 aa).

It belongs to the universal ribosomal protein uL16 family. Part of the 50S ribosomal subunit.

Binds 23S rRNA and is also seen to make contacts with the A and possibly P site tRNAs. The protein is Large ribosomal subunit protein uL16 of Thermosynechococcus vestitus (strain NIES-2133 / IAM M-273 / BP-1).